The sequence spans 395 residues: Glutamate N-acetyltransferase (395 aa).

Substrate contacts are provided by T146, K169, T180, E263, N390, and T395. Catalysis depends on T180, which acts as the Nucleophile.

Belongs to the ArgJ family. Heterotetramer of two alpha and two beta chains.

It localises to the cytoplasm. It carries out the reaction N(2)-acetyl-L-ornithine + L-glutamate = N-acetyl-L-glutamate + L-ornithine. Its pathway is amino-acid biosynthesis; L-arginine biosynthesis; L-ornithine and N-acetyl-L-glutamate from L-glutamate and N(2)-acetyl-L-ornithine (cyclic): step 1/1. Its function is as follows. Catalyzes the transfer of the acetyl group from N(2)-acetylornithine to glutamate, forming N-acetylglutamate and L-ornithine. This Methanosarcina mazei (strain ATCC BAA-159 / DSM 3647 / Goe1 / Go1 / JCM 11833 / OCM 88) (Methanosarcina frisia) protein is Glutamate N-acetyltransferase.